We begin with the raw amino-acid sequence, 296 residues long: NmrA-like family domain-containing protein 1 (296 aa).

NADP(+)-binding positions include G11–Q16, R37–R41, D58–Q59, T79–F81, K133, and Y155–N158.

It belongs to the NmrA-type oxidoreductase family. In terms of assembly, homodimer.

The protein localises to the cytoplasm. The protein resides in the perinuclear region. It localises to the nucleus. Functionally, redox sensor protein. Undergoes restructuring and subcellular redistribution in response to changes in intracellular NADPH/NADP(+) levels. The sequence is that of NmrA-like family domain-containing protein 1 (NMRAL1) from Gallus gallus (Chicken).